The following is a 320-amino-acid chain: Sucrose operon repressor (320 aa).

The HTH lacI-type domain maps to 1-57 (MVAKLTDVAKLAGVSPTTVSRVINRKGYLSEKTITKVQAAMKTLGYKPNNLARSLQG). The H-T-H motif DNA-binding region spans 5 to 24 (LTDVAKLAGVSPTTVSRVIN).

Negative regulator of scrB expression. This Streptococcus mutans serotype c (strain ATCC 700610 / UA159) protein is Sucrose operon repressor (scrR).